The following is a 188-amino-acid chain: Probable RNA 2'-phosphotransferase (188 aa).

It belongs to the KptA/TPT1 family.

Its function is as follows. Removes the 2'-phosphate from RNA via an intermediate in which the phosphate is ADP-ribosylated by NAD followed by a presumed transesterification to release the RNA and generate ADP-ribose 1''-2''-cyclic phosphate (APPR&gt;P). May function as an ADP-ribosylase. This is Probable RNA 2'-phosphotransferase from Pseudomonas savastanoi pv. phaseolicola (strain 1448A / Race 6) (Pseudomonas syringae pv. phaseolicola (strain 1448A / Race 6)).